We begin with the raw amino-acid sequence, 537 residues long: Cytochrome P450 monooxygenase claR (537 aa).

A helical membrane pass occupies residues 23–43 (VVTITEVALGIITLYLLGSYI). Position 454 (Cys454) interacts with heme.

This sequence belongs to the cytochrome P450 family. Requires heme as cofactor.

The protein localises to the membrane. The enzyme catalyses (2E)-geranylhydroquinone + reduced [NADPH--hemoprotein reductase] + O2 = wigandol + oxidized [NADPH--hemoprotein reductase] + 2 H2O + H(+). Its pathway is secondary metabolite biosynthesis; terpenoid biosynthesis. Cytochrome P450 monooxygenase; part of the gene cluster that mediates the biosynthesis of clavilactone A, a meroterpenoid that features a unique benzo-fused ten-membered carbocyclic ring unit with an alpha,beta-epoxy-gamma-lactone moiety, forming an intriguing 10/5/3 tricyclic nested skeleton. ClaR, ClaS and ClaT are sufficient to produce clavilactone A. ClaR acts as a macrocyclase to catalyze the oxidative cyclization of the isopentenyl to the nonterpenoid moieties to form the benzo-fused macrocycle, leading to wigantol. The biosynthesis begins with the prenyltransferase claS that transfers geranyl pyrophosphate (GPP) to hydroquinone to produces geranylhydroquinone. The cytochrome P450 monooxygenase claR then catalyzes the diradical coupling reaction between the intramolecular hydroquinone and allyl moieties to form the benzo-fused ten-membered carbocyclic ring unit of wigantol. Finally the cytochrome P450 monooxygenase claT exquisitely and stereoselectively assembles the alpha,beta-epoxy-gamma-lactone moiety, producing clavilactone A via arnebinol A. This chain is Cytochrome P450 monooxygenase claR, found in Ampulloclitocybe clavipes (Club foot).